Reading from the N-terminus, the 386-residue chain is Palmitoyltransferase ZDHHC9 (386 aa).

Over 1–35 (MSAVMITRKITRKWEKLPGKNTFCCDGRVMMARQK) the chain is Cytoplasmic. The helical transmembrane segment at 36–56 (GVFYLTLFLIVGTCSLFFAFE) threads the bilayer. Residues 57–63 (CPYLAVH) are Lumenal-facing. Residues 64 to 84 (LSPAIPVFAVLLFVFVMAMLL) form a helical membrane-spanning segment. Topologically, residues 85-183 (RTSFSDPGVL…NCVGKRNYRY (99 aa)) are cytoplasmic. The DHHC domain maps to 139-189 (KYCYTCKIFRPPRASHCSICDNCVDRFDHHCPWVGNCVGKRNYRYFYLFTL). The S-palmitoyl cysteine intermediate role is filled by Cys-169. A helical transmembrane segment spans residues 184-204 (FYLFTLSLSLLTIYIFAFDIV). The Lumenal portion of the chain corresponds to 205–224 (HVVLRSVDSGFVNTLKETPG). Residues 225–245 (TVLEVLVCFFTLWSVVGLTGF) form a helical membrane-spanning segment. The Cytoplasmic segment spans residues 246–386 (HTYLISLNQT…APAVIKESTH (141 aa)). Over residues 306–334 (SCSSAPSNGATTVPVNKSSNPATQTTKSS) the composition is skewed to polar residues. The disordered stretch occupies residues 306-386 (SCSSAPSNGA…APAVIKESTH (81 aa)).

Belongs to the DHHC palmitoyltransferase family. ERF2/ZDHHC9 subfamily.

The protein localises to the endoplasmic reticulum membrane. Its subcellular location is the golgi apparatus membrane. The catalysed reaction is L-cysteinyl-[protein] + hexadecanoyl-CoA = S-hexadecanoyl-L-cysteinyl-[protein] + CoA. In terms of biological role, palmitoyltransferase that catalyzes the addition of palmitate onto various protein substrates, such as ADRB2, GSDMD, HRAS, NRAS and CGAS. The chain is Palmitoyltransferase ZDHHC9 from Danio rerio (Zebrafish).